The chain runs to 268 residues: Esterase PIR7B (268 aa).

Catalysis depends on serine 86, which acts as the Acyl-ester intermediate. Active-site charge relay system residues include aspartate 218 and histidine 246.

This sequence belongs to the AB hydrolase superfamily.

Its function is as follows. Exhibits esterase activity towards naphthol AS-acetate in vitro. The protein is Esterase PIR7B (PIR7B) of Oryza sativa subsp. japonica (Rice).